The chain runs to 138 residues: Superoxide dismutase [Mn] (138 aa).

Mn(2+)-binding residues include H2, H49, D133, and H137.

The protein belongs to the iron/manganese superoxide dismutase family. Requires Mn(2+) as cofactor.

It carries out the reaction 2 superoxide + 2 H(+) = H2O2 + O2. Functionally, destroys superoxide anion radicals which are normally produced within the cells and which are toxic to biological systems. The chain is Superoxide dismutase [Mn] (sodA) from Mycolicibacterium phlei (Mycobacterium phlei).